We begin with the raw amino-acid sequence, 611 residues long: Pseudomonine synthase PmsE (611 aa).

The region spanning 533–608 (VSVENTRTWL…SWWALVEARQ (76 aa)) is the Carrier domain. An O-(pantetheine 4'-phosphoryl)serine modification is found at serine 569.

Belongs to the ATP-dependent AMP-binding enzyme family. The cofactor is pantetheine 4'-phosphate.

The catalysed reaction is salicylate + holo-[ACP] + ATP = salicyl-[ACP] + AMP + diphosphate. It participates in siderophore biosynthesis; pseudomonine biosynthesis. Involved in the biosynthesis of the siderophore pseudomonine. Specifically adenylates salicylate and loads it onto its peptidyl carrier domain, via a thioester linkage to the phosphopanthetheine moiety. The chain is Pseudomonine synthase PmsE from Pseudomonas entomophila (strain L48).